Consider the following 212-residue polypeptide: Fibrillarin-like rRNA/tRNA 2'-O-methyltransferase (212 aa).

Residues 76–77 (TT), 94–95 (EL), 119–120 (DA), and 139–142 (DIAQ) contribute to the S-adenosyl-L-methionine site.

This sequence belongs to the methyltransferase superfamily. Fibrillarin family. As to quaternary structure, interacts with nop5. Component of box C/D small ribonucleoprotein (sRNP) particles that contain rpl7ae, FlpA and nop5, plus a guide RNA.

Involved in pre-rRNA and tRNA processing. Utilizes the methyl donor S-adenosyl-L-methionine to catalyze the site-specific 2'-hydroxyl methylation of ribose moieties in rRNA and tRNA. Site specificity is provided by a guide RNA that base pairs with the substrate. Methylation occurs at a characteristic distance from the sequence involved in base pairing with the guide RNA. This chain is Fibrillarin-like rRNA/tRNA 2'-O-methyltransferase, found in Picrophilus torridus (strain ATCC 700027 / DSM 9790 / JCM 10055 / NBRC 100828 / KAW 2/3).